A 443-amino-acid polypeptide reads, in one-letter code: 23S rRNA (uracil(1939)-C(5))-methyltransferase RlmD (443 aa).

In terms of domain architecture, TRAM spans 12 to 70; the sequence is AKKLSQKIALKVQRLDHLGAGIAEHQGKVVFIPGALPGETVEVQLTEQKKNYARAKLQR. 4 residues coordinate [4Fe-4S] cluster: Cys83, Cys89, Cys92, and Cys171. S-adenosyl-L-methionine contacts are provided by Gln276, Phe305, Asn310, Glu326, Asp353, and Asp373. Cys399 serves as the catalytic Nucleophile.

This sequence belongs to the class I-like SAM-binding methyltransferase superfamily. RNA M5U methyltransferase family. RlmD subfamily.

It catalyses the reaction uridine(1939) in 23S rRNA + S-adenosyl-L-methionine = 5-methyluridine(1939) in 23S rRNA + S-adenosyl-L-homocysteine + H(+). Functionally, catalyzes the formation of 5-methyl-uridine at position 1939 (m5U1939) in 23S rRNA. This chain is 23S rRNA (uracil(1939)-C(5))-methyltransferase RlmD, found in Shewanella amazonensis (strain ATCC BAA-1098 / SB2B).